The chain runs to 909 residues: Alanine--tRNA ligase (909 aa).

Residues histidine 600, histidine 604, cysteine 704, and histidine 708 each contribute to the Zn(2+) site.

Belongs to the class-II aminoacyl-tRNA synthetase family. Zn(2+) is required as a cofactor.

The protein localises to the cytoplasm. The catalysed reaction is tRNA(Ala) + L-alanine + ATP = L-alanyl-tRNA(Ala) + AMP + diphosphate. In terms of biological role, catalyzes the attachment of alanine to tRNA(Ala) in a two-step reaction: alanine is first activated by ATP to form Ala-AMP and then transferred to the acceptor end of tRNA(Ala). Also edits incorrectly charged Ser-tRNA(Ala) and Gly-tRNA(Ala) via its editing domain. The chain is Alanine--tRNA ligase from Staphylothermus marinus (strain ATCC 43588 / DSM 3639 / JCM 9404 / F1).